A 910-amino-acid polypeptide reads, in one-letter code: Protein translocase subunit SecA (910 aa).

Residues Gln89, 107-111 (GEGKT), and Asp496 each bind ATP. A disordered region spans residues 873–910 (QEFSGGNLNRSQSNGSSVTVTTSSGGGTERKTSRRRKR). Residues 876 to 886 (SGGNLNRSQSN) are compositionally biased toward polar residues.

It belongs to the SecA family. In terms of assembly, monomer and homodimer. Part of the essential Sec protein translocation apparatus which comprises SecA, SecYEG and auxiliary proteins SecDF. Other proteins may also be involved.

Its subcellular location is the cell inner membrane. It localises to the cytoplasm. The catalysed reaction is ATP + H2O + cellular proteinSide 1 = ADP + phosphate + cellular proteinSide 2.. Functionally, part of the Sec protein translocase complex. Interacts with the SecYEG preprotein conducting channel. Has a central role in coupling the hydrolysis of ATP to the transfer of proteins into and across the cell membrane, serving as an ATP-driven molecular motor driving the stepwise translocation of polypeptide chains across the membrane. The polypeptide is Protein translocase subunit SecA (Leptospira interrogans serogroup Icterohaemorrhagiae serovar copenhageni (strain Fiocruz L1-130)).